Here is a 363-residue protein sequence, read N- to C-terminus: Phosphoserine aminotransferase (363 aa).

L-glutamate is bound at residue arginine 42. Residues 76–77 (GR), tryptophan 102, threonine 156, aspartate 175, and glutamine 198 each bind pyridoxal 5'-phosphate. Residue lysine 199 is modified to N6-(pyridoxal phosphate)lysine. 240–241 (NT) contacts pyridoxal 5'-phosphate.

Belongs to the class-V pyridoxal-phosphate-dependent aminotransferase family. SerC subfamily. Homodimer. Pyridoxal 5'-phosphate serves as cofactor.

It is found in the cytoplasm. The enzyme catalyses O-phospho-L-serine + 2-oxoglutarate = 3-phosphooxypyruvate + L-glutamate. The catalysed reaction is 4-(phosphooxy)-L-threonine + 2-oxoglutarate = (R)-3-hydroxy-2-oxo-4-phosphooxybutanoate + L-glutamate. Its pathway is amino-acid biosynthesis; L-serine biosynthesis; L-serine from 3-phospho-D-glycerate: step 2/3. It functions in the pathway cofactor biosynthesis; pyridoxine 5'-phosphate biosynthesis; pyridoxine 5'-phosphate from D-erythrose 4-phosphate: step 3/5. Its function is as follows. Catalyzes the reversible conversion of 3-phosphohydroxypyruvate to phosphoserine and of 3-hydroxy-2-oxo-4-phosphonooxybutanoate to phosphohydroxythreonine. In Shewanella frigidimarina (strain NCIMB 400), this protein is Phosphoserine aminotransferase.